The primary structure comprises 180 residues: Alpha-S2-casein-like A (180 aa).

A signal peptide spans 1-15 (MRFFVFTCLLAVALA). Phosphoserine occurs at positions 23 and 25. The disordered stretch occupies residues 46-66 (PTNQETPSVSSSEESVEVQTE).

The protein belongs to the alpha-casein family. As to expression, mammary gland specific. Secreted in milk.

The protein localises to the secreted. Important role in the capacity of milk to transport calcium phosphate. This is Alpha-S2-casein-like A (CSN1S2A) from Oryctolagus cuniculus (Rabbit).